The primary structure comprises 235 residues: Glucosamine-6-phosphate deaminase (235 aa).

D62 (proton acceptor; for enolization step) is an active-site residue. Catalysis depends on N128, which acts as the For ring-opening step. The active-site Proton acceptor; for ring-opening step is the H130. E135 acts as the For ring-opening step in catalysis.

This sequence belongs to the glucosamine/galactosamine-6-phosphate isomerase family. NagB subfamily.

It catalyses the reaction alpha-D-glucosamine 6-phosphate + H2O = beta-D-fructose 6-phosphate + NH4(+). It functions in the pathway amino-sugar metabolism; N-acetylneuraminate degradation; D-fructose 6-phosphate from N-acetylneuraminate: step 5/5. In terms of biological role, catalyzes the reversible isomerization-deamination of glucosamine 6-phosphate (GlcN6P) to form fructose 6-phosphate (Fru6P) and ammonium ion. The chain is Glucosamine-6-phosphate deaminase from Latilactobacillus sakei subsp. sakei (strain 23K) (Lactobacillus sakei subsp. sakei).